The chain runs to 437 residues: GTPase Der (437 aa).

2 EngA-type G domains span residues 3–168 (PLIA…PESE) and 178–353 (VKLA…RNRS). Residues 9–16 (GRPNVGKS), 56–60 (DTGGY), 120–123 (NKVE), 184–191 (GRPNVGKS), 231–235 (DTAGL), and 296–299 (NKWD) contribute to the GTP site. The KH-like domain occupies 354–437 (RKISTSSLNR…VPISLRFMEK (84 aa)).

The protein belongs to the TRAFAC class TrmE-Era-EngA-EngB-Septin-like GTPase superfamily. EngA (Der) GTPase family. Associates with the 50S ribosomal subunit.

GTPase that plays an essential role in the late steps of ribosome biogenesis. This is GTPase Der from Chlorobium limicola (strain DSM 245 / NBRC 103803 / 6330).